A 221-amino-acid chain; its full sequence is Octanoyltransferase (221 aa).

One can recognise a BPL/LPL catalytic domain in the interval 36 to 221 (KKEDNQLFFC…LRSIFMEIFA (186 aa)). Residues 81–88 (RGGDITYH), 154–156 (AIG), and 167–169 (GFA) contribute to the substrate site. The Acyl-thioester intermediate role is filled by Cys185.

This sequence belongs to the LipB family.

Its subcellular location is the cytoplasm. The enzyme catalyses octanoyl-[ACP] + L-lysyl-[protein] = N(6)-octanoyl-L-lysyl-[protein] + holo-[ACP] + H(+). It participates in protein modification; protein lipoylation via endogenous pathway; protein N(6)-(lipoyl)lysine from octanoyl-[acyl-carrier-protein]: step 1/2. In terms of biological role, catalyzes the transfer of endogenously produced octanoic acid from octanoyl-acyl-carrier-protein onto the lipoyl domains of lipoate-dependent enzymes. Lipoyl-ACP can also act as a substrate although octanoyl-ACP is likely to be the physiological substrate. In Parabacteroides distasonis (strain ATCC 8503 / DSM 20701 / CIP 104284 / JCM 5825 / NCTC 11152), this protein is Octanoyltransferase.